A 959-amino-acid polypeptide reads, in one-letter code: Oxysterol-binding protein-related protein 6 (959 aa).

The tract at residues M1 to P60 is disordered. An N-acetylserine modification is found at S2. Residues T14–Q29 show a composition bias toward low complexity. Residues R30–E40 show a composition bias toward basic and acidic residues. S35 is modified (phosphoserine). The span at T42–R53 shows a compositional bias: polar residues. The PH domain maps to P86–L181. A phosphoserine mark is found at S190 and S290.

This sequence belongs to the OSBP family. In terms of assembly, homodimer. Interacts with OSBPL3. Expressed in skin, respiratory epithelium, small intestine epithelium, pancreas, striated muscle, brain, spinal ganglia, and nervous plexus of the intestine (at protein level). In the brain, specifically in the cerebellum, it is expressed in Purkinje and granule cells. Expressed in hepatocytes and macrophages.

Its subcellular location is the nucleus envelope. The protein localises to the cytoplasm. It localises to the cytosol. The protein resides in the endoplasmic reticulum membrane. It is found in the cell membrane. Its subcellular location is the endosome membrane. In terms of biological role, regulates cellular transport and efflux of cholesterol. Plays a role in phosphatidylinositol-4-phophate (PI4P) turnover at the neuronal membrane. Binds via its PH domain PI4P, phosphatidylinositol-4,5-diphosphate, phosphatidylinositol-3,4,5-triphosphate, and phosphatidic acid. Weakly binds 25-hydroxycholesterol. This chain is Oxysterol-binding protein-related protein 6 (Osbpl6), found in Mus musculus (Mouse).